Here is a 286-residue protein sequence, read N- to C-terminus: Bifunctional protein FolD 2 (286 aa).

NADP(+) is bound by residues 165–167 (GRG), threonine 192, and isoleucine 233.

This sequence belongs to the tetrahydrofolate dehydrogenase/cyclohydrolase family. Homodimer.

The enzyme catalyses (6R)-5,10-methylene-5,6,7,8-tetrahydrofolate + NADP(+) = (6R)-5,10-methenyltetrahydrofolate + NADPH. It carries out the reaction (6R)-5,10-methenyltetrahydrofolate + H2O = (6R)-10-formyltetrahydrofolate + H(+). It functions in the pathway one-carbon metabolism; tetrahydrofolate interconversion. Functionally, catalyzes the oxidation of 5,10-methylenetetrahydrofolate to 5,10-methenyltetrahydrofolate and then the hydrolysis of 5,10-methenyltetrahydrofolate to 10-formyltetrahydrofolate. This Salinispora tropica (strain ATCC BAA-916 / DSM 44818 / JCM 13857 / NBRC 105044 / CNB-440) protein is Bifunctional protein FolD 2.